Reading from the N-terminus, the 447-residue chain is UPF0210 protein Ldb1026 (447 aa).

The protein belongs to the UPF0210 family. Homodimer.

The chain is UPF0210 protein Ldb1026 from Lactobacillus delbrueckii subsp. bulgaricus (strain ATCC 11842 / DSM 20081 / BCRC 10696 / JCM 1002 / NBRC 13953 / NCIMB 11778 / NCTC 12712 / WDCM 00102 / Lb 14).